The sequence spans 367 residues: D-alanine--D-alanine ligase (367 aa).

Residues 141-346 (KNLFAQAGLR…YPELIERLIA (206 aa)) form the ATP-grasp domain. ATP is bound at residue 174 to 229 (ERELGYPCFVKPANAGSSVGISKCKQRGDLKAAFIEAFQYDRKIIIEEAIVGREIE). Mg(2+) is bound by residues Asp300, Glu313, and Asn315.

Belongs to the D-alanine--D-alanine ligase family. It depends on Mg(2+) as a cofactor. Requires Mn(2+) as cofactor.

It is found in the cytoplasm. The catalysed reaction is 2 D-alanine + ATP = D-alanyl-D-alanine + ADP + phosphate + H(+). It functions in the pathway cell wall biogenesis; peptidoglycan biosynthesis. Functionally, cell wall formation. In Geobacillus kaustophilus (strain HTA426), this protein is D-alanine--D-alanine ligase.